The following is a 348-amino-acid chain: NADH-ubiquinone oxidoreductase chain 2 (348 aa).

The next 9 helical transmembrane spans lie at 13-33 (VITG…WAGL), 60-80 (FLAQ…NNLL), 96-116 (PLAM…HFWV), 124-144 (PLTS…SIMY), 150-170 (INTH…SWGG), 200-220 (TITT…FLTL), 241-261 (LMPL…LTGF), 278-298 (IIPT…MRLI), and 325-345 (LFIP…PLIL).

The protein belongs to the complex I subunit 2 family. Core subunit of respiratory chain NADH dehydrogenase (Complex I) which is composed of 45 different subunits. Interacts with TMEM242.

It localises to the mitochondrion inner membrane. It catalyses the reaction a ubiquinone + NADH + 5 H(+)(in) = a ubiquinol + NAD(+) + 4 H(+)(out). Its function is as follows. Core subunit of the mitochondrial membrane respiratory chain NADH dehydrogenase (Complex I) which catalyzes electron transfer from NADH through the respiratory chain, using ubiquinone as an electron acceptor. Essential for the catalytic activity and assembly of complex I. The sequence is that of NADH-ubiquinone oxidoreductase chain 2 from Papio hamadryas (Hamadryas baboon).